A 210-amino-acid chain; its full sequence is MADS-box protein AeAP3-2 (210 aa).

In terms of domain architecture, MADS-box spans 1–36 (GGLLKKARELAILCDAQLGVIIFSSSGKMFEFSSPP). Residues 59–149 (NQQVYCEITR…YRVIQDHHAA (91 aa)) form the K-box domain.

In terms of tissue distribution, expressed exclusively in the carpel.

It localises to the nucleus. In terms of biological role, probable transcription factor. The protein is MADS-box protein AeAP3-2 (AP3-2) of Asarum europaeum (Asarabacca).